The chain runs to 154 residues: MLLPDWKIRKEILIKPFSEESLQPAGYDLRVGKEAYIQGKFIDVEKEGKVIIPPKEYALILTLERIKLPDDIMGDMKIRSSLAREGVLGSFAWVDPGWDGNLTLMLYNASEKEVILRYKERFVQIAFLRLEAPAKNPYRGNYQGSRRIVLSKRS.

DCTP contacts are provided by residues 79–84 (RSSLAR), aspartate 95, glutamine 124, and tyrosine 138.

Belongs to the dCTP deaminase family. In terms of assembly, homotrimer.

It catalyses the reaction dCTP + H2O + H(+) = dUTP + NH4(+). It functions in the pathway pyrimidine metabolism; dUMP biosynthesis; dUMP from dCTP (dUTP route): step 1/2. Catalyzes the deamination of dCTP to dUTP. This is dCTP deaminase from Pyrococcus abyssi (strain GE5 / Orsay).